Consider the following 326-residue polypeptide: MKVQDMDKCAPSSDWNVLYWVLGTVLMPVALPLAIINIWQRFQAQKFRNQLPGKVVLITGASSGLGESLAHVFYRAGCRVILAARRTQELERVKKDLLALDVDPAYPPTVLPLDLAELNSIPEFVTRVLAVYNQVDILINNGGISVRADVASTAVDVDLKVMVVNYFGSVALTKALLPSMVKRGSGHICFISSVQGKFAIPQRAAYSASKHAMQAFADSLRAEVANKNINVSCVSPGYIRTQLSLNALTGSGSSYGKVDETTAKGMSPDKLAERILQCILRKEPDIIVSDVQAKIAYYLRHLCPSLYFWIMAKRAVKLENAEKKST.

Over Met-1–Val-17 the chain is Cytoplasmic. Residues Leu-18–Ile-38 form a helical; Signal-anchor for type II membrane protein membrane-spanning segment. Residues Trp-39–Thr-326 lie on the Peroxisomal side of the membrane. NAD(+) is bound at residue Leu-57–Ile-81. Ser-193 lines the substrate pocket. The active-site Proton acceptor is the Tyr-206.

The protein belongs to the short-chain dehydrogenases/reductases (SDR) family.

It is found in the peroxisome membrane. Putative oxidoreductase. This chain is Dehydrogenase/reductase SDR family protein 7-like, found in Drosophila melanogaster (Fruit fly).